Here is a 243-residue protein sequence, read N- to C-terminus: CD48 antigen (243 aa).

Positions 1–26 are cleaved as a signal peptide; the sequence is MCSRGWDSCLALELLLLPLSLLVTSI. 2 consecutive Ig-like C2-type domains span residues 29 to 127 and 132 to 212; these read HLVH…KLQV and PKPV…VCLS. Residues asparagine 40, asparagine 44, asparagine 104, asparagine 162, and asparagine 189 are each glycosylated (N-linked (GlcNAc...) asparagine). A disulfide bond links cysteine 154 and cysteine 196. Serine 220 is lipidated: GPI-anchor amidated serine. Residues 221–243 constitute a propeptide, removed in mature form; sequence FGVEWIASWLVVTVPTILGLLLT.

As to quaternary structure, interacts with CD2. Interacts with CD244; this interaction is possible not only on different cells (trans interaction) but also on the same cell (cis interaction). Interacts with LCK. As to expression, widely expressed on all hematopoietic cells.

The protein localises to the cell membrane. It is found in the membrane raft. The protein resides in the secreted. Its function is as follows. Glycosylphosphatidylinositol (GPI)-anchored cell surface glycoprotein that interacts via its N-terminal immunoglobulin domain with cell surface receptors including CD244/2B4 or CD2 to regulate immune cell function and activation. Participates in T-cell signaling transduction by associating with CD2 and efficiently bringing the Src family protein kinase LCK and LAT to the TCR/CD3 complex. In turn, promotes LCK phosphorylation and subsequent activation. Induces the phosphorylation of the cytoplasmic immunoreceptortyrosine switch motifs (ITSMs) of CD244 initiating a series of signaling events that leads to the generation of the immunological synapse and the directed release of cytolytic granules containing perforin and granzymes by T-lymphocytes and NK-cells. The chain is CD48 antigen (CD48) from Homo sapiens (Human).